A 443-amino-acid polypeptide reads, in one-letter code: ATP-dependent protease ATPase subunit HslU (443 aa).

ATP-binding positions include isoleucine 18, 60-65 (GVGKTE), aspartate 256, glutamate 321, and arginine 393.

It belongs to the ClpX chaperone family. HslU subfamily. As to quaternary structure, a double ring-shaped homohexamer of HslV is capped on each side by a ring-shaped HslU homohexamer. The assembly of the HslU/HslV complex is dependent on binding of ATP.

It is found in the cytoplasm. ATPase subunit of a proteasome-like degradation complex; this subunit has chaperone activity. The binding of ATP and its subsequent hydrolysis by HslU are essential for unfolding of protein substrates subsequently hydrolyzed by HslV. HslU recognizes the N-terminal part of its protein substrates and unfolds these before they are guided to HslV for hydrolysis. This Enterobacter sp. (strain 638) protein is ATP-dependent protease ATPase subunit HslU.